The chain runs to 125 residues: Large ribosomal subunit protein bL12 (125 aa).

Belongs to the bacterial ribosomal protein bL12 family. In terms of assembly, homodimer. Part of the ribosomal stalk of the 50S ribosomal subunit. Forms a multimeric L10(L12)X complex, where L10 forms an elongated spine to which 2 to 4 L12 dimers bind in a sequential fashion. Binds GTP-bound translation factors.

In terms of biological role, forms part of the ribosomal stalk which helps the ribosome interact with GTP-bound translation factors. Is thus essential for accurate translation. This is Large ribosomal subunit protein bL12 from Rhizobium johnstonii (strain DSM 114642 / LMG 32736 / 3841) (Rhizobium leguminosarum bv. viciae).